We begin with the raw amino-acid sequence, 487 residues long: Betaine aldehyde dehydrogenase (487 aa).

2 residues coordinate K(+): Ser-26 and Asp-93. 150–152 (GAW) serves as a coordination point for NAD(+). Lys-162 functions as the Charge relay system in the catalytic mechanism. NAD(+)-binding positions include 176–179 (KPSE) and 229–232 (SVPT). Residue Leu-244 coordinates K(+). Glu-250 serves as the catalytic Proton acceptor. NAD(+)-binding residues include Gly-252, Cys-284, and Glu-384. Cys-284 acts as the Nucleophile in catalysis. Cys-284 is subject to Cysteine sulfenic acid (-SOH). 2 residues coordinate K(+): Lys-454 and Gly-457. Glu-461 serves as the catalytic Charge relay system.

It belongs to the aldehyde dehydrogenase family. As to quaternary structure, dimer of dimers. The cofactor is K(+).

It carries out the reaction betaine aldehyde + NAD(+) + H2O = glycine betaine + NADH + 2 H(+). Its pathway is amine and polyamine biosynthesis; betaine biosynthesis via choline pathway; betaine from betaine aldehyde: step 1/1. Functionally, involved in the biosynthesis of the osmoprotectant glycine betaine. Catalyzes the irreversible oxidation of betaine aldehyde to the corresponding acid. In Rhizobium johnstonii (strain DSM 114642 / LMG 32736 / 3841) (Rhizobium leguminosarum bv. viciae), this protein is Betaine aldehyde dehydrogenase.